The following is a 361-amino-acid chain: Zygote arrest protein 1 (361 aa).

Disordered stretches follow at residues 1–23 (MFPASTFHPCPHPYPQATKAGDG), 98–128 (QPAGCRASPDARSGSCQPRGHAGAGRSPRSW), and 148–252 (VAGG…EQDK). A Phosphothreonine; by CDK1 modification is found at Thr154. The residue at position 161 (Ser161) is a Phosphoserine; by CDK1. Basic and acidic residues predominate over residues 168–177 (REPEPREVAA). The 3CxxC-type zinc finger occupies 263-346 (KYGYYHCKDC…RQDLCGRCKD (84 aa)).

It belongs to the ZAR1 family. Interacts with YBX2. Phosphorylation by CDK1 does not regulate formation of MARDO (mitochondria-associated ribonucleoprotein domain) membraneless compartment. In terms of processing, ubiquitinated and degradaded by the proteasome during oocyte meiotic maturation, leading to MARDO (mitochondria-associated ribonucleoprotein domain) membraneless compartment dissolution. In terms of tissue distribution, ovary. Expressed in primary oocytes (from primary through antral follicle stages) and during the progression from Meiosis I to Meiosis II. The mRNA is detected in growing oocytes (early primary follicle, type 3a) through fully grown oocytes (antral follicle, type 8).

The protein localises to the cytoplasm. It localises to the cytoplasmic ribonucleoprotein granule. Its function is as follows. mRNA-binding protein that mediates formation of MARDO (mitochondria-associated ribonucleoprotein domain), a membraneless compartment that stores maternal mRNAs in oocytes. MARDO assembly around mitochondria is directed by an increase in mitochondrial membrane potential during oocyte growth. Promotes formation of MARDO phase-separated membraneless compartment by undergoing liquid-liquid phase separation upon binding to maternal mRNAs. Binds to the 3'-UTR of maternal mRNAs. Maternal mRNAs stored in the MARDO are translationally repressed. Essential for female fertility and oocyte-to-embryo transition by coordinating maternal mRNA storage, translation and degradation. This chain is Zygote arrest protein 1, found in Mus musculus (Mouse).